The primary structure comprises 176 residues: Small ribosomal subunit protein uS4 (176 aa).

The region spanning 104 to 166 (RRLQTIVYKK…PTSPFKQNPP (63 aa)) is the S4 RNA-binding domain.

The protein belongs to the universal ribosomal protein uS4 family. In terms of assembly, part of the 30S ribosomal subunit. Contacts protein S5. The interaction surface between S4 and S5 is involved in control of translational fidelity.

In terms of biological role, one of the primary rRNA binding proteins, it binds directly to 16S rRNA where it nucleates assembly of the body of the 30S subunit. With S5 and S12 plays an important role in translational accuracy. The protein is Small ribosomal subunit protein uS4 (rps4) of Sulfolobus acidocaldarius (strain ATCC 33909 / DSM 639 / JCM 8929 / NBRC 15157 / NCIMB 11770).